A 206-amino-acid chain; its full sequence is Small ribosomal subunit protein uS4B (206 aa).

Residues 96–156 (GRLDNVVYRM…EKAKKQSRIG (61 aa)) form the S4 RNA-binding domain.

Belongs to the universal ribosomal protein uS4 family. In terms of assembly, part of the 30S ribosomal subunit. Contacts protein S5. The interaction surface between S4 and S5 is involved in control of translational fidelity.

Its function is as follows. One of the primary rRNA binding proteins, it binds directly to 16S rRNA where it nucleates assembly of the body of the 30S subunit. With S5 and S12 plays an important role in translational accuracy. This chain is Small ribosomal subunit protein uS4B, found in Psychromonas ingrahamii (strain DSM 17664 / CCUG 51855 / 37).